Reading from the N-terminus, the 72-residue chain is Sec-independent protein translocase protein TatA (72 aa).

A helical membrane pass occupies residues 1-21 (MAGLSIWHVVIFAIVVILLFG). Residues 47 to 72 (DEAASLNSPRTIDAQVKTSESTSVKS) form a disordered region. Residues 51-72 (SLNSPRTIDAQVKTSESTSVKS) are compositionally biased toward polar residues.

The protein belongs to the TatA/E family. In terms of assembly, the Tat system comprises two distinct complexes: a TatABC complex, containing multiple copies of TatA, TatB and TatC subunits, and a separate TatA complex, containing only TatA subunits. Substrates initially bind to the TatABC complex, which probably triggers association of the separate TatA complex to form the active translocon.

It localises to the cell inner membrane. Functionally, part of the twin-arginine translocation (Tat) system that transports large folded proteins containing a characteristic twin-arginine motif in their signal peptide across membranes. TatA could form the protein-conducting channel of the Tat system. This is Sec-independent protein translocase protein TatA from Acinetobacter baumannii (strain AB307-0294).